Consider the following 103-residue polypeptide: MQGVWSQLWRKYADYKYNKFERFAVWEMIEPYRRPKTFTTLITIYVAAFYTGVIGAAVTEQLYKEKFWEEHPGKTVPLMKPVFYRGPWRVYRGEAIASDASSQ.

Residues 38–58 (FTTLITIYVAAFYTGVIGAAV) traverse the membrane as a helical segment.

The protein localises to the membrane. This is an uncharacterized protein from Arabidopsis thaliana (Mouse-ear cress).